A 220-amino-acid polypeptide reads, in one-letter code: N-(5'-phosphoribosyl)anthranilate isomerase (220 aa).

It belongs to the TrpF family.

It carries out the reaction N-(5-phospho-beta-D-ribosyl)anthranilate = 1-(2-carboxyphenylamino)-1-deoxy-D-ribulose 5-phosphate. The protein operates within amino-acid biosynthesis; L-tryptophan biosynthesis; L-tryptophan from chorismate: step 3/5. The polypeptide is N-(5'-phosphoribosyl)anthranilate isomerase (Xylella fastidiosa (strain M12)).